The chain runs to 370 residues: UDP-3-O-acylglucosamine N-acyltransferase (370 aa).

His252 acts as the Proton acceptor in catalysis. A disordered region spans residues Ala350–Ala370. Residues Ala358–Ala370 are compositionally biased toward low complexity.

This sequence belongs to the transferase hexapeptide repeat family. LpxD subfamily. In terms of assembly, homotrimer.

The enzyme catalyses a UDP-3-O-[(3R)-3-hydroxyacyl]-alpha-D-glucosamine + a (3R)-hydroxyacyl-[ACP] = a UDP-2-N,3-O-bis[(3R)-3-hydroxyacyl]-alpha-D-glucosamine + holo-[ACP] + H(+). Its pathway is bacterial outer membrane biogenesis; LPS lipid A biosynthesis. Its function is as follows. Catalyzes the N-acylation of UDP-3-O-acylglucosamine using 3-hydroxyacyl-ACP as the acyl donor. Is involved in the biosynthesis of lipid A, a phosphorylated glycolipid that anchors the lipopolysaccharide to the outer membrane of the cell. The protein is UDP-3-O-acylglucosamine N-acyltransferase of Paraburkholderia xenovorans (strain LB400).